The following is an 842-amino-acid chain: Glycogen phosphorylase, muscle form (842 aa).

Serine 2 bears the N-acetylserine mark. The residue at position 15 (serine 15) is a Phosphoserine; by PHK; in form phosphorylase A. 2 residues coordinate AMP: aspartate 43 and tyrosine 76. Residues tyrosine 204 and tyrosine 227 each carry the phosphotyrosine modification. 310 to 319 (RRFKSSKFGC) serves as a coordination point for AMP. Serine 430 is modified (phosphoserine). Residue tyrosine 473 is modified to Phosphotyrosine. Serine 514 carries the post-translational modification Phosphoserine. Lysine 681 carries the N6-(pyridoxal phosphate)lysine modification. Residues serine 747 and serine 748 each carry the phosphoserine modification.

The protein belongs to the glycogen phosphorylase family. Homodimer. Homotetramer; to form the enzymatically active phosphorylase A. Requires pyridoxal 5'-phosphate as cofactor. In terms of processing, phosphorylation of Ser-15 converts phosphorylase B (unphosphorylated) to phosphorylase A.

The enzyme catalyses [(1-&gt;4)-alpha-D-glucosyl](n) + phosphate = [(1-&gt;4)-alpha-D-glucosyl](n-1) + alpha-D-glucose 1-phosphate. Allosterically regulated through the non-covalent binding of metabolites, being activated by AMP and inhibited by ATP, ADP, and glucose-6-phosphate. The activity is also controlled by post-translational modifications including phosphorylation. Its function is as follows. Allosteric enzyme that catalyzes the rate-limiting step in glycogen catabolism, the phosphorolytic cleavage of glycogen to produce glucose-1-phosphate, and plays a central role in maintaining cellular and organismal glucose homeostasis. This chain is Glycogen phosphorylase, muscle form, found in Macaca fascicularis (Crab-eating macaque).